We begin with the raw amino-acid sequence, 717 residues long: SUN domain-containing protein 2 (717 aa).

The tract at residues Met1–His66 is disordered. Positions Met1–Asp139 are LMNA-binding. Residues Met1–Thr212 lie on the Nuclear side of the membrane. Ser12 is modified (phosphoserine). The span at Ser19–Ser32 shows a compositional bias: low complexity. Residues Ser38 and Ser54 each carry the phosphoserine modification. Residue Thr107 is modified to Phosphothreonine. Phosphoserine occurs at positions 110, 113, 116, and 136. The chain crosses the membrane as a helical span at residues Phe213–Phe233. Topologically, residues Tyr234 to His717 are perinuclear space. Coiled-coil stretches lie at residues Glu273–Ser296, Arg348–Gly440, and Leu475–Glu506. The sufficient for interaction with SYNE1 and SYNE2 stretch occupies residues Ala507–His717. One can recognise an SUN domain in the interval Gly555–Ala716. Residues Cys601 and Cys705 are joined by a disulfide bond. N-linked (GlcNAc...) asparagine glycosylation is present at Asn636.

Core component of the LINC complex which is composed of inner nuclear membrane SUN domain-containing proteins coupled to outer nuclear membrane KASH domain-containing nesprins. SUN and KASH domain-containing proteins seem to bind each other promiscuously; however, differentially expression of LINC complex constituents is giving rise to specific assemblies. At least SUN1/2-containing core LINC complexes are proposed to be hexameric composed of three protomers of each KASH and SUN domain-containing protein. Interacts with SYNE2; the SUN2:SYNE2/KASH2 LINC complex is a heterohexamer; the homotrimeric cloverleave-like conformation of the SUN domain is a prerequisite for LINC complex formation in which three separate SYNE2/KASH2 peptides bind at the interface of adjacent SUN domains. Component of a probable SUN2:KASH5 LINC complex. Interacts with SYNE1 and SYNE3; probably forming respective LINC complexes. Interacts with A-type lamin. Interaction with lamins B1 and C is hardly detectable. Interacts with EMD and RAB5A. Interacts with TMEM43. Interacts with TMEM201. Post-translationally, the disulfide bond with SYNE2 is required for stability of the SUN2:SYNE2/KASH2 LINC complex under tensile forces though not required for the interaction. The disulfide bond is proposed to be conserved in LINC complexes involved in force transmission. As to expression, widely expressed. Highly expressed in heart, lung and muscle. Weakly expressed in fetal heart. Slightly overexpressed in some heart tissues form patients with congenital heart defects.

The protein localises to the nucleus inner membrane. The protein resides in the nucleus envelope. It localises to the endosome membrane. In terms of biological role, as a component of the LINC (LInker of Nucleoskeleton and Cytoskeleton) complex, involved in the connection between the nuclear lamina and the cytoskeleton. The nucleocytoplasmic interactions established by the LINC complex play an important role in the transmission of mechanical forces across the nuclear envelope and in nuclear movement and positioning. Specifically, SYNE2 and SUN2 assemble in arrays of transmembrane actin-associated nuclear (TAN) lines which are bound to F-actin cables and couple the nucleus to retrograde actin flow during actin-dependent nuclear movement. Required for interkinetic nuclear migration (INM) and essential for nucleokinesis and centrosome-nucleus coupling during radial neuronal migration in the cerebral cortex and during glial migration. Required for nuclear migration in retinal photoreceptor progenitors implicating association with cytoplasmic dynein-dynactin and kinesin motor complexes, and probably B-type lamins; SUN1 and SUN2 seem to act redundantly. The SUN1/2:KASH5 LINC complex couples telomeres to microtubules during meiosis; SUN1 and SUN2 seem to act at least partial redundantly. Anchors chromosome movement in the prophase of meiosis and is involved in selective gene expression of coding and non-coding RNAs needed for gametogenesis. Required for telomere attachment to nuclear envelope and gametogenesis. May also function on endocytic vesicles as a receptor for RAB5-GDP and participate in the activation of RAB5. This chain is SUN domain-containing protein 2, found in Homo sapiens (Human).